The primary structure comprises 72 residues: Translation initiation factor IF-1 (72 aa).

Residues 1 to 72 (MSKEDHIEME…SKARITFRHR (72 aa)) form the S1-like domain.

It belongs to the IF-1 family. As to quaternary structure, component of the 30S ribosomal translation pre-initiation complex which assembles on the 30S ribosome in the order IF-2 and IF-3, IF-1 and N-formylmethionyl-tRNA(fMet); mRNA recruitment can occur at any time during PIC assembly.

The protein resides in the cytoplasm. In terms of biological role, one of the essential components for the initiation of protein synthesis. Stabilizes the binding of IF-2 and IF-3 on the 30S subunit to which N-formylmethionyl-tRNA(fMet) subsequently binds. Helps modulate mRNA selection, yielding the 30S pre-initiation complex (PIC). Upon addition of the 50S ribosomal subunit IF-1, IF-2 and IF-3 are released leaving the mature 70S translation initiation complex. This Methylococcus capsulatus (strain ATCC 33009 / NCIMB 11132 / Bath) protein is Translation initiation factor IF-1.